We begin with the raw amino-acid sequence, 344 residues long: Phosphate acyltransferase (344 aa).

This sequence belongs to the PlsX family. In terms of assembly, homodimer. Probably interacts with PlsY.

The protein resides in the cytoplasm. The enzyme catalyses a fatty acyl-[ACP] + phosphate = an acyl phosphate + holo-[ACP]. It functions in the pathway lipid metabolism; phospholipid metabolism. Functionally, catalyzes the reversible formation of acyl-phosphate (acyl-PO(4)) from acyl-[acyl-carrier-protein] (acyl-ACP). This enzyme utilizes acyl-ACP as fatty acyl donor, but not acyl-CoA. This Thermosynechococcus vestitus (strain NIES-2133 / IAM M-273 / BP-1) protein is Phosphate acyltransferase.